The following is a 364-amino-acid chain: 1-aminocyclopropane-1-carboxylate oxidase homolog 11 (364 aa).

The Fe2OG dioxygenase domain occupies 213–312 (KSLLMICHYY…RISVASFFSS (100 aa)). Fe cation-binding residues include histidine 237, aspartate 239, and histidine 293. Residue arginine 303 participates in 2-oxoglutarate binding.

It belongs to the iron/ascorbate-dependent oxidoreductase family. Requires Fe(2+) as cofactor.

The sequence is that of 1-aminocyclopropane-1-carboxylate oxidase homolog 11 from Arabidopsis thaliana (Mouse-ear cress).